The chain runs to 147 residues: Ubiquitin-conjugating enzyme E2 D2 (147 aa).

The UBC core domain occupies 1–147 (MALKRIHKEL…SREWTQKYAM (147 aa)). Residue Cys85 is the Glycyl thioester intermediate of the active site.

Belongs to the ubiquitin-conjugating enzyme family. As to quaternary structure, interacts with SCF (SKP1-CUL1-F-box protein) E3 ubiquitin ligase complex. Interacts with CNOT4 (via RING domain). Interacts with E3 ubiquitin-protein ligases CBLC, PJA1 and PJA2. Interacts with PDZRN3. Interacts with PPP1R11. Interacts with E3 ubiquitin-protein ligase PHF7; the interaction inhibits cleavage of PHF7 and promotes association of the complex with the nucleosome core particle.

It catalyses the reaction S-ubiquitinyl-[E1 ubiquitin-activating enzyme]-L-cysteine + [E2 ubiquitin-conjugating enzyme]-L-cysteine = [E1 ubiquitin-activating enzyme]-L-cysteine + S-ubiquitinyl-[E2 ubiquitin-conjugating enzyme]-L-cysteine.. The catalysed reaction is S-ubiquitinyl-[E1 ubiquitin-activating enzyme]-L-cysteine + [acceptor protein]-L-lysine = [E1 ubiquitin-activating enzyme]-L-cysteine + N(6)-monoubiquitinyl-[acceptor protein]-L-lysine.. Its pathway is protein modification; protein ubiquitination. Accepts ubiquitin from the E1 complex and catalyzes its covalent attachment to other proteins. In vitro catalyzes 'Lys-48'-linked polyubiquitination. Mediates the selective degradation of short-lived and abnormal proteins. Functions in the E6/E6-AP-induced ubiquitination of p53/TP53. Mediates ubiquitination of PEX5 and SQSTM1 and autoubiquitination of STUB1 and TRAF6. Involved in the signal-induced conjugation and subsequent degradation of NFKBIA, FBXW2-mediated GCM1 ubiquitination and degradation, MDM2-dependent degradation of p53/TP53 and the activation of MAVS in the mitochondria by RIGI in response to viral infection. Essential for viral activation of IRF3. The protein is Ubiquitin-conjugating enzyme E2 D2 (UBE2D2) of Sus scrofa (Pig).